The chain runs to 134 residues: Small ribosomal subunit protein uS9 (134 aa).

Residues E114–R134 form a disordered region. Residues Y120–R134 are compositionally biased toward basic residues.

This sequence belongs to the universal ribosomal protein uS9 family.

The polypeptide is Small ribosomal subunit protein uS9 (Thermotoga sp. (strain RQ2)).